The primary structure comprises 432 residues: uncharacterized protein (432 aa).

The region spanning 223–432 (ASAVRGEALF…KDLIEYLKTR (210 aa)) is the Cytochrome c domain. Heme c is bound by residues C236, C239, and H240.

This is an uncharacterized protein from Sinorhizobium fredii (strain NBRC 101917 / NGR234).